The primary structure comprises 438 residues: GTPase Der (438 aa).

2 consecutive EngA-type G domains span residues 4–168 (PIVA…NDPS) and 177–352 (IRIA…DNYS). Residues 10–17 (GRPNVGKS), 57–61 (DTGGI), 120–123 (NKID), 183–190 (GKPNVGKS), 230–234 (DTAGL), and 295–298 (NKWD) each bind GTP. A KH-like domain is found at 353-437 (KRVSTGLLND…GIEIEYRARK (85 aa)).

Belongs to the TRAFAC class TrmE-Era-EngA-EngB-Septin-like GTPase superfamily. EngA (Der) GTPase family. In terms of assembly, associates with the 50S ribosomal subunit.

Functionally, GTPase that plays an essential role in the late steps of ribosome biogenesis. This is GTPase Der from Clostridium perfringens (strain ATCC 13124 / DSM 756 / JCM 1290 / NCIMB 6125 / NCTC 8237 / Type A).